The primary structure comprises 241 residues: Glutathione S-transferase omega-1 (241 aa).

Ser2 is modified (N-acetylserine). The GST N-terminal domain occupies 22–101 (GSIRIYSMRF…YLDEAYPGKK (80 aa)). Cys32 functions as the Nucleophile in the catalytic mechanism. Lys57 is modified (N6-acetyllysine). Residues Lys59, Val72, and 85-86 (ES) contribute to the glutathione site. Positions 106-230 (DPYEKACQKM…DWQGFLELYL (125 aa)) constitute a GST C-terminal domain. Phosphoserine is present on Ser129. An N6-acetyllysine mark is found at Lys143, Lys148, and Lys152.

This sequence belongs to the GST superfamily. Omega family. In terms of assembly, homodimer. As to expression, ubiquitous. Highest expression in liver, pancreas, skeletal muscle, spleen, thymus, colon, blood leukocyte and heart. Lowest expression in brain, placenta and lung.

Its subcellular location is the cytoplasm. It localises to the cytosol. The enzyme catalyses RX + glutathione = an S-substituted glutathione + a halide anion + H(+). The catalysed reaction is L-dehydroascorbate + 2 glutathione = glutathione disulfide + L-ascorbate. It carries out the reaction methylarsonate + 2 glutathione + H(+) = methylarsonous acid + glutathione disulfide + H2O. Its activity is regulated as follows. Monomethylarsonic acid reductase activity is competitively inhibited by 1-chloro 2,4-dinitrobenzene (CDNB) and by deoxycholate. Functionally, exhibits glutathione-dependent thiol transferase and dehydroascorbate reductase activities. Has S-(phenacyl)glutathione reductase activity. Also has glutathione S-transferase activity. Participates in the biotransformation of inorganic arsenic and reduces monomethylarsonic acid (MMA) and dimethylarsonic acid. This chain is Glutathione S-transferase omega-1 (GSTO1), found in Homo sapiens (Human).